We begin with the raw amino-acid sequence, 592 residues long: Aspartate--tRNA ligase (592 aa).

Residue Glu176 participates in L-aspartate binding. The tract at residues 200–203 (QIFK) is aspartate. Arg222 is a binding site for L-aspartate. ATP contacts are provided by residues 222–224 (RDE) and Gln231. His450 contributes to the L-aspartate binding site. Glu484 serves as a coordination point for ATP. Arg491 contacts L-aspartate. 536–539 (GLDR) contacts ATP.

The protein belongs to the class-II aminoacyl-tRNA synthetase family. Type 1 subfamily. As to quaternary structure, homodimer.

The protein resides in the cytoplasm. The enzyme catalyses tRNA(Asp) + L-aspartate + ATP = L-aspartyl-tRNA(Asp) + AMP + diphosphate. Functionally, catalyzes the attachment of L-aspartate to tRNA(Asp) in a two-step reaction: L-aspartate is first activated by ATP to form Asp-AMP and then transferred to the acceptor end of tRNA(Asp). In Macrococcus caseolyticus (strain JCSC5402) (Macrococcoides caseolyticum), this protein is Aspartate--tRNA ligase.